The primary structure comprises 123 residues: Thioredoxin domain-containing protein 17 (123 aa).

The Thioredoxin domain maps to 41-123 (SWCPDCVKAE…DLVRMMFTED (83 aa)). Residues Cys-43 and Cys-46 each act as nucleophile in the active site. The cysteines at positions 43 and 46 are disulfide-linked.

It belongs to the thioredoxin family.

It is found in the cytoplasm. In terms of biological role, disulfide reductase. May participate in various redox reactions through the reversible oxidation of its active center dithiol to a disulfide and catalyze dithiol-disulfide exchange reactions. Has peroxidase activity and may contribute to the elimination of cellular hydrogen peroxide. The protein is Thioredoxin domain-containing protein 17 (txndc17) of Danio rerio (Zebrafish).